A 102-amino-acid polypeptide reads, in one-letter code: MSDSTLTRMDLAEAVFREVGLSRHESAQLVESVLGHISDALVRGEQVKISSFGTFSVRDKNERIGRNPKTGEEVPITPRRVLSFRPSHLMKDRVAAGNRRKG.

It belongs to the bacterial histone-like protein family. Heterodimer of an alpha and a beta chain.

Its function is as follows. This protein is one of the two subunits of integration host factor, a specific DNA-binding protein that functions in genetic recombination as well as in transcriptional and translational control. The protein is Integration host factor subunit alpha of Paracoccus denitrificans (strain Pd 1222).